A 240-amino-acid chain; its full sequence is UDP-2,3-diacylglucosamine hydrolase (240 aa).

Positions 8, 10, 41, 79, and 114 each coordinate Mn(2+). 79–80 (NR) contributes to the substrate binding site. Residues D122, S160, N164, K167, and H195 each contribute to the substrate site. Positions 195 and 197 each coordinate Mn(2+).

It belongs to the LpxH family. Mn(2+) is required as a cofactor.

The protein localises to the cell inner membrane. It catalyses the reaction UDP-2-N,3-O-bis[(3R)-3-hydroxytetradecanoyl]-alpha-D-glucosamine + H2O = 2-N,3-O-bis[(3R)-3-hydroxytetradecanoyl]-alpha-D-glucosaminyl 1-phosphate + UMP + 2 H(+). The protein operates within glycolipid biosynthesis; lipid IV(A) biosynthesis; lipid IV(A) from (3R)-3-hydroxytetradecanoyl-[acyl-carrier-protein] and UDP-N-acetyl-alpha-D-glucosamine: step 4/6. Its function is as follows. Hydrolyzes the pyrophosphate bond of UDP-2,3-diacylglucosamine to yield 2,3-diacylglucosamine 1-phosphate (lipid X) and UMP by catalyzing the attack of water at the alpha-P atom. Involved in the biosynthesis of lipid A, a phosphorylated glycolipid that anchors the lipopolysaccharide to the outer membrane of the cell. This is UDP-2,3-diacylglucosamine hydrolase from Cellvibrio japonicus (strain Ueda107) (Pseudomonas fluorescens subsp. cellulosa).